Reading from the N-terminus, the 365-residue chain is Probable UDP-arabinopyranose mutase 1 (365 aa).

The DXD motif signature appears at 100–102; the sequence is DDD. Arg-148 is a glycosylation site (N-linked (Glc...) arginine).

It belongs to the RGP family. Homopentamer or homohexamer. Requires Mn(2+) as cofactor. The cofactor is Mg(2+). Reversibly glycosylated by UDP-glucose, UDP-xylose and UDP-galactose, but not UDP-mannose. Expressed in all tissues tested, including root, tuber, leaf, petiole, shoot, stolon and stem.

The protein resides in the secreted. It localises to the cell wall. The protein localises to the cell junction. Its subcellular location is the plasmodesma. It is found in the golgi apparatus. It catalyses the reaction UDP-beta-L-arabinofuranose = UDP-beta-L-arabinopyranose. Its function is as follows. Probable UDP-L-arabinose mutase involved in the biosynthesis of cell wall non-cellulosic polysaccharides. Was initially shown to possess an autoglycosylating activity which is dependent on the presence of UDP-glucose and manganese. The polypeptide is Probable UDP-arabinopyranose mutase 1 (Solanum tuberosum (Potato)).